Consider the following 604-residue polypeptide: Elongation factor 4 (604 aa).

A tr-type G domain is found at 7-189; that stretch reads KRIRNFCIIA…SVVDRVPPPA (183 aa). GTP contacts are provided by residues 19–24 and 136–139; these read DHGKST and NKID.

The protein belongs to the TRAFAC class translation factor GTPase superfamily. Classic translation factor GTPase family. LepA subfamily.

The protein localises to the cell inner membrane. It carries out the reaction GTP + H2O = GDP + phosphate + H(+). Functionally, required for accurate and efficient protein synthesis under certain stress conditions. May act as a fidelity factor of the translation reaction, by catalyzing a one-codon backward translocation of tRNAs on improperly translocated ribosomes. Back-translocation proceeds from a post-translocation (POST) complex to a pre-translocation (PRE) complex, thus giving elongation factor G a second chance to translocate the tRNAs correctly. Binds to ribosomes in a GTP-dependent manner. In Synechococcus sp. (strain CC9311), this protein is Elongation factor 4.